The chain runs to 169 residues: Secretory-abundant heat soluble protein 1 (169 aa).

The signal sequence occupies residues 1 to 19 (MSRAAVAIALLGCVVAAYG). The SAHS-c1 stretch occupies residues 31 to 60 (EWTGKSWMGKWESTDRIENFDAFISALGLP). The SAHS-c2 stretch occupies residues 75–103 (WKEGDHYHHQISVPDKNYKNDVNFKLNEE). Asn-109 is a glycosylation site (N-linked (GlcNAc...) asparagine). Positions 116–165 (KYTEDGGNLKAEVHVPSRNKVIHDEYKVNGDELEKTYKVGDVTAKRWYKK) are SAHS-c3.

It belongs to the Secretory-abundant heat soluble protein (SAHS) family.

The protein resides in the secreted. Functionally, secreted heat soluble protein acting as a molecular shield in water-deficient condition. Tardigrade-specific intrinsically disordered proteins (TDPs) are essential for desiccation tolerance by forming non-crystalline amorphous solids upon desiccation, and this vitrified state mirrors their protective capabilities. The chain is Secretory-abundant heat soluble protein 1 from Ramazzottius varieornatus (Water bear).